The primary structure comprises 194 residues: Adenylate kinase isoenzyme 1 (194 aa).

19 to 24 (GSGKGT) serves as a coordination point for ATP. Residues 39-68 (STGDLLRAEVSSGSERGKKLQAIMEKGELV) are NMP. Residues Thr-40, Arg-45, 66–68 (ELV), 95–98 (GYPR), and Gln-102 contribute to the AMP site. The interval 132 to 142 (KRGETSGRVDD) is LID. Arg-133 is a binding site for ATP. AMP is bound by residues Arg-139 and Arg-150. Gly-178 lines the ATP pocket.

It belongs to the adenylate kinase family. AK1 subfamily. Monomer. Mg(2+) serves as cofactor. Skeletal muscle.

The protein resides in the cytoplasm. The catalysed reaction is a ribonucleoside 5'-phosphate + ATP = a ribonucleoside 5'-diphosphate + ADP. It carries out the reaction AMP + ATP = 2 ADP. It catalyses the reaction dAMP + ATP = dADP + ADP. The enzyme catalyses dATP + AMP = dADP + ADP. The catalysed reaction is dAMP + dATP = 2 dADP. It carries out the reaction a 2'-deoxyribonucleoside 5'-diphosphate + ATP = a 2'-deoxyribonucleoside 5'-triphosphate + ADP. It catalyses the reaction a ribonucleoside 5'-diphosphate + ATP = a ribonucleoside 5'-triphosphate + ADP. The enzyme catalyses CDP + GTP = CTP + GDP. The catalysed reaction is GDP + ATP = GTP + ADP. It carries out the reaction UDP + ATP = UTP + ADP. It catalyses the reaction GTP + UDP = UTP + GDP. The enzyme catalyses dTDP + GTP = dTTP + GDP. The catalysed reaction is dCDP + GTP = dCTP + GDP. It carries out the reaction dGDP + ATP = dGTP + ADP. It catalyses the reaction dADP + GTP = dATP + GDP. The enzyme catalyses thiamine diphosphate + ADP = thiamine triphosphate + AMP. Functionally, catalyzes the reversible transfer of the terminal phosphate group between ATP and AMP. Also displays broad nucleoside diphosphate kinase activity. Plays an important role in cellular energy homeostasis and in adenine nucleotide metabolism. Also catalyzes at a very low rate the synthesis of thiamine triphosphate (ThTP) from thiamine diphosphate (ThDP) and ADP. The protein is Adenylate kinase isoenzyme 1 of Gallus gallus (Chicken).